Consider the following 291-residue polypeptide: 4-hydroxy-tetrahydrodipicolinate synthase (291 aa).

Thr-45 serves as a coordination point for pyruvate. Catalysis depends on Tyr-133, which acts as the Proton donor/acceptor. Lys-161 serves as the catalytic Schiff-base intermediate with substrate. Ile-203 serves as a coordination point for pyruvate.

The protein belongs to the DapA family. In terms of assembly, homotetramer; dimer of dimers.

The protein localises to the cytoplasm. It catalyses the reaction L-aspartate 4-semialdehyde + pyruvate = (2S,4S)-4-hydroxy-2,3,4,5-tetrahydrodipicolinate + H2O + H(+). It participates in amino-acid biosynthesis; L-lysine biosynthesis via DAP pathway; (S)-tetrahydrodipicolinate from L-aspartate: step 3/4. Its function is as follows. Catalyzes the condensation of (S)-aspartate-beta-semialdehyde [(S)-ASA] and pyruvate to 4-hydroxy-tetrahydrodipicolinate (HTPA). The polypeptide is 4-hydroxy-tetrahydrodipicolinate synthase (Laribacter hongkongensis (strain HLHK9)).